A 303-amino-acid chain; its full sequence is Recombination-associated protein RdgC (303 aa).

It belongs to the RdgC family.

It localises to the cytoplasm. The protein resides in the nucleoid. Functionally, may be involved in recombination. This Aeromonas hydrophila subsp. hydrophila (strain ATCC 7966 / DSM 30187 / BCRC 13018 / CCUG 14551 / JCM 1027 / KCTC 2358 / NCIMB 9240 / NCTC 8049) protein is Recombination-associated protein RdgC.